Here is a 382-residue protein sequence, read N- to C-terminus: LIM homeobox transcription factor 1-alpha (382 aa).

2 LIM zinc-binding domains span residues Ser33 to Val92 and Val92 to Leu154. Disordered regions lie at residues Ala161–Arg208 and Lys252–Ile286. A DNA-binding region (homeobox) is located at residues Pro195 to Ala254. Positions Arg256–Arg269 are enriched in low complexity.

The protein localises to the nucleus. Acts as a transcriptional activator by binding to an A/T-rich sequence, the FLAT element, in the insulin gene promoter. Required for development of the roof plate and, in turn, for specification of dorsal cell fates in the CNS and developing vertebrae. The polypeptide is LIM homeobox transcription factor 1-alpha (Lmx1a) (Mus musculus (Mouse)).